Reading from the N-terminus, the 134-residue chain is ATP synthase epsilon chain (134 aa).

This sequence belongs to the ATPase epsilon chain family. F-type ATPases have 2 components, CF(1) - the catalytic core - and CF(0) - the membrane proton channel. CF(1) has five subunits: alpha(3), beta(3), gamma(1), delta(1), epsilon(1). CF(0) has three main subunits: a, b and c.

It is found in the cell inner membrane. Its function is as follows. Produces ATP from ADP in the presence of a proton gradient across the membrane. The polypeptide is ATP synthase epsilon chain (Nitratidesulfovibrio vulgaris (strain ATCC 29579 / DSM 644 / CCUG 34227 / NCIMB 8303 / VKM B-1760 / Hildenborough) (Desulfovibrio vulgaris)).